The sequence spans 635 residues: Threonine--tRNA ligase (635 aa).

The TGS domain maps to 1–61 (MVSIRLPDGS…DRDASLAIVT (61 aa)). The tract at residues 242 to 533 (DHRKLGKQLD…LIEHHAGAMP (292 aa)) is catalytic. 3 residues coordinate Zn(2+): Cys-333, His-384, and His-510.

It belongs to the class-II aminoacyl-tRNA synthetase family. In terms of assembly, homodimer. Zn(2+) serves as cofactor.

It localises to the cytoplasm. The enzyme catalyses tRNA(Thr) + L-threonine + ATP = L-threonyl-tRNA(Thr) + AMP + diphosphate + H(+). In terms of biological role, catalyzes the attachment of threonine to tRNA(Thr) in a two-step reaction: L-threonine is first activated by ATP to form Thr-AMP and then transferred to the acceptor end of tRNA(Thr). Also edits incorrectly charged L-seryl-tRNA(Thr). This Burkholderia cenocepacia (strain ATCC BAA-245 / DSM 16553 / LMG 16656 / NCTC 13227 / J2315 / CF5610) (Burkholderia cepacia (strain J2315)) protein is Threonine--tRNA ligase.